Consider the following 490-residue polypeptide: Beta-1,3-glucan-binding protein 1 (490 aa).

Residues 1–19 form the signal peptide; sequence MYKQTVVIFLLCFFICVSC. Residues 20-119 enclose the CBM39 domain; the sequence is YEVPPAKLEA…GEWTVTGYVD (100 aa). The 339-residue stretch at 152-490 folds into the GH16 domain; it reads PPTSQNTYPC…QVDYVRVYAL (339 aa). Asn372 carries an N-linked (GlcNAc...) asparagine glycan.

Belongs to the insect beta-1,3-glucan binding protein family. In terms of assembly, monomer. In terms of tissue distribution, hemolymph.

The protein resides in the secreted. Functionally, plays a role in the recognition of invading microorganisms activating the phenoloxidase cascade. Binds specifically to beta-1,3-glucan. Binds the Aspergillus niger cell wall component alpha-1,3-glucan, a fungal pathogen-associated molecular pattern (PAMP) that activates the host immune response. The sequence is that of Beta-1,3-glucan-binding protein 1 from Galleria mellonella (Greater wax moth).